We begin with the raw amino-acid sequence, 264 residues long: NAD kinase (264 aa).

The Proton acceptor role is filled by Asp45. Residues 45–46 (DG), 121–122 (NE), Arg147, Asp149, Ala184, and Gln221 each bind NAD(+).

The protein belongs to the NAD kinase family. A divalent metal cation is required as a cofactor.

It localises to the cytoplasm. The catalysed reaction is NAD(+) + ATP = ADP + NADP(+) + H(+). Its function is as follows. Involved in the regulation of the intracellular balance of NAD and NADP, and is a key enzyme in the biosynthesis of NADP. Catalyzes specifically the phosphorylation on 2'-hydroxyl of the adenosine moiety of NAD to yield NADP. The sequence is that of NAD kinase from Leuconostoc mesenteroides subsp. mesenteroides (strain ATCC 8293 / DSM 20343 / BCRC 11652 / CCM 1803 / JCM 6124 / NCDO 523 / NBRC 100496 / NCIMB 8023 / NCTC 12954 / NRRL B-1118 / 37Y).